A 219-amino-acid chain; its full sequence is Pyridoxine/pyridoxamine 5'-phosphate oxidase (219 aa).

Substrate is bound by residues 13–16 and Lys-76; that span reads RVEY. FMN-binding positions include 71–76, 86–87, Lys-93, and Gln-115; these read RSVLCK and FT. Substrate-binding residues include Tyr-133, Arg-137, and Ser-141. FMN contacts are provided by residues 150 to 151 and Trp-196; that span reads QS. Substrate is bound at residue 202–204; sequence RVH. Arg-206 provides a ligand contact to FMN.

Belongs to the pyridoxamine 5'-phosphate oxidase family. Homodimer. The cofactor is FMN.

It carries out the reaction pyridoxamine 5'-phosphate + O2 + H2O = pyridoxal 5'-phosphate + H2O2 + NH4(+). The catalysed reaction is pyridoxine 5'-phosphate + O2 = pyridoxal 5'-phosphate + H2O2. The protein operates within cofactor metabolism; pyridoxal 5'-phosphate salvage; pyridoxal 5'-phosphate from pyridoxamine 5'-phosphate: step 1/1. It functions in the pathway cofactor metabolism; pyridoxal 5'-phosphate salvage; pyridoxal 5'-phosphate from pyridoxine 5'-phosphate: step 1/1. Its function is as follows. Catalyzes the oxidation of either pyridoxine 5'-phosphate (PNP) or pyridoxamine 5'-phosphate (PMP) into pyridoxal 5'-phosphate (PLP). This is Pyridoxine/pyridoxamine 5'-phosphate oxidase from Mycobacterium leprae (strain TN).